Consider the following 310-residue polypeptide: Acetaldehyde dehydrogenase 1 (310 aa).

12–15 (SGNI) contacts NAD(+). The Acyl-thioester intermediate role is filled by Cys127. NAD(+)-binding positions include 163 to 171 (SAGPGTRAN) and Asn282.

The protein belongs to the acetaldehyde dehydrogenase family.

It catalyses the reaction acetaldehyde + NAD(+) + CoA = acetyl-CoA + NADH + H(+). The chain is Acetaldehyde dehydrogenase 1 from Mycobacterium sp. (strain KMS).